A 366-amino-acid chain; its full sequence is Ubiquitin carboxyl-terminal hydrolase 46 (366 aa).

The region spanning 35–365 is the USP domain; the sequence is FGLVNFGNTC…SGYILFYQSR (331 aa). C44 (nucleophile) is an active-site residue. C182, C185, C229, and C232 together coordinate Zn(2+). Catalysis depends on H313, which acts as the Proton acceptor.

This sequence belongs to the peptidase C19 family. USP12/USP46 subfamily. In terms of assembly, interacts with WDR48. Interacts with WDR20. Interacts with DMWD. Component of the USP46/WDR20/WDR48 deubiquitinating complex. In terms of tissue distribution, broadly expressed.

Its subcellular location is the cytoplasm. It carries out the reaction Thiol-dependent hydrolysis of ester, thioester, amide, peptide and isopeptide bonds formed by the C-terminal Gly of ubiquitin (a 76-residue protein attached to proteins as an intracellular targeting signal).. Its activity is regulated as follows. Activated by interaction with WDR48. Deubiquitinating enzyme that plays a role in behavior, possibly by regulating GABA action. May act by mediating the deubiquitination of GAD1/GAD67. Has almost no deubiquitinating activity by itself and requires the interaction with WDR48 to have a high activity. Not involved in deubiquitination of monoubiquitinated FANCD2. The polypeptide is Ubiquitin carboxyl-terminal hydrolase 46 (USP46) (Homo sapiens (Human)).